Consider the following 199-residue polypeptide: Inner membrane protein E199L (199 aa).

The N-linked (GlcNAc...) asparagine; by host glycan is linked to asparagine 131. A helical transmembrane segment spans residues 150 to 170 (INVMNHPFLTLILIILILVII).

This sequence belongs to the asfivirus E199L family. Interacts with host PYCR2; this interaction results in autophagy activation.

The protein localises to the virion membrane. The protein resides in the host membrane. In terms of biological role, essential for viral fusion with host endosomal membrane and core release. Not required for virus morphogenesis and egress. Induces complete autophagy through the interaction with and down-regulation of host PYCR2. The sequence is that of Inner membrane protein E199L from African swine fever virus (isolate Pig/Kenya/KEN-50/1950) (ASFV).